Reading from the N-terminus, the 520-residue chain is GMP synthase [glutamine-hydrolyzing] (520 aa).

The region spanning 4–202 (KILILDFGSQ…VHDICGCGSD (199 aa)) is the Glutamine amidotransferase type-1 domain. The active-site Nucleophile is Cys-81. Catalysis depends on residues His-176 and Glu-178. The GMPS ATP-PPase domain occupies 203 to 395 (WNMPDYVEEA…LGLPHDMVYR (193 aa)). Position 230–236 (230–236 (SGGVDSS)) interacts with ATP.

As to quaternary structure, homodimer.

It catalyses the reaction XMP + L-glutamine + ATP + H2O = GMP + L-glutamate + AMP + diphosphate + 2 H(+). Its pathway is purine metabolism; GMP biosynthesis; GMP from XMP (L-Gln route): step 1/1. Functionally, catalyzes the synthesis of GMP from XMP. This chain is GMP synthase [glutamine-hydrolyzing], found in Thiobacillus denitrificans (strain ATCC 25259 / T1).